The chain runs to 684 residues: Soluble guanylate cyclase gcy-32 (684 aa).

H105 is a heme binding site. Positions 396–432 (DVEVNLQLEANNEQLETMTRELELERQKTDSILKDML) form a coiled coil. The 129-residue stretch at 454-582 (TVMFCDLPAF…ETVTLASQME (129 aa)) folds into the Guanylate cyclase domain. 2 residues coordinate Mg(2+): D459 and D503.

The protein belongs to the adenylyl cyclase class-4/guanylyl cyclase family. In terms of assembly, heterodimer; with other soluble guanylate cyclases. Heme serves as cofactor. As to expression, expressed in a small number of neurons, corresponding to URX, AQR and PQR neurons.

It localises to the cytoplasm. It carries out the reaction GTP = 3',5'-cyclic GMP + diphosphate. With respect to regulation, may be regulated by molecular oxygen. Probably not activated by nitric oxide (NO). In terms of biological role, synthesizes cyclic GMP (cGMP) from GTP. Influences aerotaxis responses, aggregation and bordering behaviors (gathering around the edge of a bacterial lawn) in combination with other soluble guanylate cyclases. The chain is Soluble guanylate cyclase gcy-32 (gcy-32) from Caenorhabditis elegans.